We begin with the raw amino-acid sequence, 474 residues long: MSEGTLYDKVWENHKVTTLPNGQDQLFVGLHLIHEVTSPQAFGMLRERDIEVARPDLTHATVDHIVPTADQSRPLDNEAAEEMMAELEENVREAGITLDDPTTGNQGIVHVIGPEQGLTQPGKTIVCGDSHTSTHGAFGALAFGIGTSQIRDVLATQTIAMEKKDVRKIEVTGELGEGVTAKDIILTIIRRLGTDGGVGYVYEYAGEAIENLGMEGRMSICNMSIEGGARAGYVNPDETTYEWLRETDAFADDPERFEELKPYWESVRSDPDAEYDDVVTIDGSEIEPVVTWGTTPGQGIGITEEIPAPEDLPADKQDTARRAQDHMGVEPGETMAGYNIDVAFLGSCTNARLPDLRSAAEIIKGREVHDSVRAMVVPGSQRVKAAAEDEGLDSVFKEAGFDWREAGCSMCLGMNDDQLVGDEACASSSNRNFVGRQGSKDGRTVLMSPEMVAAAAVTGEVTDVRELPKAEVEA.

Positions Gly-293–Pro-313 are disordered. 3 residues coordinate [4Fe-4S] cluster: Cys-348, Cys-408, and Cys-411.

Belongs to the aconitase/IPM isomerase family. LeuC type 1 subfamily. Heterodimer of LeuC and LeuD. The cofactor is [4Fe-4S] cluster.

It carries out the reaction (2R,3S)-3-isopropylmalate = (2S)-2-isopropylmalate. The protein operates within amino-acid biosynthesis; L-leucine biosynthesis; L-leucine from 3-methyl-2-oxobutanoate: step 2/4. Its function is as follows. Catalyzes the isomerization between 2-isopropylmalate and 3-isopropylmalate, via the formation of 2-isopropylmaleate. This Natronomonas pharaonis (strain ATCC 35678 / DSM 2160 / CIP 103997 / JCM 8858 / NBRC 14720 / NCIMB 2260 / Gabara) (Halobacterium pharaonis) protein is 3-isopropylmalate dehydratase large subunit.